The chain runs to 533 residues: Methyl-accepting chemotaxis protein IV (533 aa).

At 1–6 (MFNRIR) the chain is on the cytoplasmic side. A helical membrane pass occupies residues 7–33 (ISTTLFLILILCGILQIGSNGMSFWAF). Over 34-188 (RDDLQRLNQV…AQSQRNYQIS (155 aa)) the chain is Periplasmic. Residues 189-209 (ALVFISMIIVAAIYISSALWW) traverse the membrane as a helical segment. Over 210–533 (TRKMIVQPLA…VQLQIAPVVS (324 aa)) the chain is Cytoplasmic. The 53-residue stretch at 212 to 264 (KMIVQPLAIIGSHFDSIAAGNLARPIAVYGRNEITAIFASLKTMQQALRGTVS) folds into the HAMP domain. A Methyl-accepting transducer domain is found at 269-498 (GSQEMHIGIA…EAAVATEQLA (230 aa)). 3 positions are modified to glutamate methyl ester (Gln): Gln293, Gln300, and Gln307. Glu489 bears the Glutamate methyl ester (Glu) mark.

The protein belongs to the methyl-accepting chemotaxis (MCP) protein family.

It localises to the cell inner membrane. Mediates taxis toward dipeptides via an interaction with the periplasmic dipeptide-binding protein. In terms of biological role, chemotactic-signal transducers respond to changes in the concentration of attractants and repellents in the environment, transduce a signal from the outside to the inside of the cell, and facilitate sensory adaptation through the variation of the level of methylation. Attractants increase the level of methylation while repellents decrease the level of methylation, the methyl groups are added by the methyltransferase CheR and removed by the methylesterase CheB. The chain is Methyl-accepting chemotaxis protein IV (tap) from Escherichia coli (strain K12).